A 241-amino-acid polypeptide reads, in one-letter code: Proteasome subunit beta type-1 (241 aa).

Residue Met-1 is modified to N-acetylmethionine. A propeptide spanning residues 1 to 28 (MLSSVAAYSGAGRDLAMEPHSSVGPLQL) is cleaved from the precursor. The O-linked (GlcNAc) serine glycan is linked to Ser-58. Residues Ser-62 and Ser-68 each carry the phosphoserine modification. Tyr-150 bears the Phosphotyrosine mark. Ser-162 is modified (phosphoserine). Lys-204 bears the N6-acetyllysine mark. O-linked (GlcNAc) serine glycosylation occurs at Ser-209.

Belongs to the peptidase T1B family. In terms of assembly, the 26S proteasome consists of a 20S proteasome core and two 19S regulatory subunits. The 20S proteasome core is a barrel-shaped complex made of 28 subunits that are arranged in four stacked rings. The two outer rings are each formed by seven alpha subunits, and the two inner rings are formed by seven beta subunits. The proteolytic activity is exerted by three beta-subunits PSMB5, PSMB6 and PSMB7. Interacts with SERPINB2. Interacts with RFPL4A.

The protein localises to the cytoplasm. It is found in the nucleus. Non-catalytic component of the 20S core proteasome complex involved in the proteolytic degradation of most intracellular proteins. This complex plays numerous essential roles within the cell by associating with different regulatory particles. Associated with two 19S regulatory particles, forms the 26S proteasome and thus participates in the ATP-dependent degradation of ubiquitinated proteins. The 26S proteasome plays a key role in the maintenance of protein homeostasis by removing misfolded or damaged proteins that could impair cellular functions, and by removing proteins whose functions are no longer required. Associated with the PA200 or PA28, the 20S proteasome mediates ubiquitin-independent protein degradation. This type of proteolysis is required in several pathways including spermatogenesis (20S-PA200 complex) or generation of a subset of MHC class I-presented antigenic peptides (20S-PA28 complex). The protein is Proteasome subunit beta type-1 (PSMB1) of Bos taurus (Bovine).